The sequence spans 233 residues: Biosynthetic peptidoglycan transglycosylase (233 aa).

A helical membrane pass occupies residues 8–28 (LIALPVGIFIFFNAYVYGNII).

Belongs to the glycosyltransferase 51 family.

It is found in the cell inner membrane. The enzyme catalyses [GlcNAc-(1-&gt;4)-Mur2Ac(oyl-L-Ala-gamma-D-Glu-L-Lys-D-Ala-D-Ala)](n)-di-trans,octa-cis-undecaprenyl diphosphate + beta-D-GlcNAc-(1-&gt;4)-Mur2Ac(oyl-L-Ala-gamma-D-Glu-L-Lys-D-Ala-D-Ala)-di-trans,octa-cis-undecaprenyl diphosphate = [GlcNAc-(1-&gt;4)-Mur2Ac(oyl-L-Ala-gamma-D-Glu-L-Lys-D-Ala-D-Ala)](n+1)-di-trans,octa-cis-undecaprenyl diphosphate + di-trans,octa-cis-undecaprenyl diphosphate + H(+). Its pathway is cell wall biogenesis; peptidoglycan biosynthesis. Peptidoglycan polymerase that catalyzes glycan chain elongation from lipid-linked precursors. The polypeptide is Biosynthetic peptidoglycan transglycosylase (Neisseria gonorrhoeae (strain NCCP11945)).